A 452-amino-acid chain; its full sequence is Major royal jelly protein 2 (452 aa).

The signal sequence occupies residues Met1–Gly17. Residues Asn145 and Asn178 are each glycosylated (N-linked (GlcNAc...) asparagine). The disordered stretch occupies residues Asn416–Asn452.

N-linked core structure contains mannose (which consists of 8-alpha-mannosyl residues, one beta-mannosyl residue, and chitobiose). In terms of tissue distribution, secreted from the hypopharyngeal glands of the worker honey bee (at protein level); expression peaks at 12 days post eclosion. Expressed in the brains of adult worker bees peaking at 12 days post eclosion (at protein level). Expressed in the spermatheca of adult queen bees (at protein level); Expression levels are higher in mated queens than in virgin queens.

It localises to the secreted. Highly abundant protein component of royal jelly, a substance produced in the hypopharyngeal gland containing proteins, free amino acids, fatty acids, sugars and other nutrients, which is fed to developing larvae by worker nurse bees. Major royal jelly proteins (MRJPs) are high in essential amino acids and probably have a nutritional function in larval food. All larvae are fed some royal jelly (also known as worker jelly) early in their development but it forms the principal source of nutrition for larvae destined to become queen bees. Produced in the spermatheca of adult queen bees, along with other major royal jelly proteins, where it may act as a nutrient supply for sperm stored by mated queens, or be involved in energy metabolism. This Apis mellifera (Honeybee) protein is Major royal jelly protein 2.